Reading from the N-terminus, the 278-residue chain is Bicarbonate transport ATP-binding protein CmpD (278 aa).

Positions 21-254 (LIVENVSKIY…RPRDRERIME (234 aa)) constitute an ABC transporter domain. Position 57 to 64 (57 to 64 (GHSGCGKS)) interacts with ATP.

It belongs to the ABC transporter superfamily. Nitrate/nitrite/cyanate uptake transporter (NitT) (TC 3.A.1.16) family. The complex is composed of two ATP-binding proteins (CmpC and CmpD), a transmembrane protein (CmpB) and a solute-binding protein (CmpA).

The protein resides in the cell inner membrane. In terms of biological role, part of the ABC transporter complex CmpABCD involved in bicarbonate transport. Responsible for energy coupling to the transport system. This chain is Bicarbonate transport ATP-binding protein CmpD (cmpD), found in Synechococcus elongatus (strain ATCC 33912 / PCC 7942 / FACHB-805) (Anacystis nidulans R2).